The following is a 345-amino-acid chain: Inositol phosphoceramide mannosyltransferase 2 (345 aa).

The chain crosses the membrane as a helical span at residues 4-24 (VIYKFAVFAAVNFFLMSSIVL). Asn-55 is a glycosylation site (N-linked (GlcNAc...) asparagine). The chain crosses the membrane as a helical span at residues 220–240 (YWLPYLTIMLSTGPLSISFLW). The N-linked (GlcNAc...) asparagine glycan is linked to Asn-269. The chain crosses the membrane as a helical span at residues 296–316 (LAYVIVAGFCLYFILSYMFFS).

This sequence belongs to the glycosyltransferase 32 family.

It is found in the golgi apparatus. The protein localises to the cis-Golgi network membrane. The protein resides in the trans-Golgi network membrane. With imt1 and imt3, is required for the synthesis of mannosyl phosphorylinositol ceramide (MIPC). Catalyzes the addition of mannosyl to phosphorylinositol ceramide (IPC). MIPC is essential for cell morphology, cell-surface distribution of ergosterol, localization for plasma-membrane transporters, and lipid-raft-mediated endocytosis of plasma membrane proteins to the vacuole. This chain is Inositol phosphoceramide mannosyltransferase 2, found in Schizosaccharomyces pombe (strain 972 / ATCC 24843) (Fission yeast).